The following is a 96-amino-acid chain: Aspartyl/glutamyl-tRNA(Asn/Gln) amidotransferase subunit C (96 aa).

It belongs to the GatC family. As to quaternary structure, heterotrimer of A, B and C subunits.

It carries out the reaction L-glutamyl-tRNA(Gln) + L-glutamine + ATP + H2O = L-glutaminyl-tRNA(Gln) + L-glutamate + ADP + phosphate + H(+). It catalyses the reaction L-aspartyl-tRNA(Asn) + L-glutamine + ATP + H2O = L-asparaginyl-tRNA(Asn) + L-glutamate + ADP + phosphate + 2 H(+). In terms of biological role, allows the formation of correctly charged Asn-tRNA(Asn) or Gln-tRNA(Gln) through the transamidation of misacylated Asp-tRNA(Asn) or Glu-tRNA(Gln) in organisms which lack either or both of asparaginyl-tRNA or glutaminyl-tRNA synthetases. The reaction takes place in the presence of glutamine and ATP through an activated phospho-Asp-tRNA(Asn) or phospho-Glu-tRNA(Gln). The sequence is that of Aspartyl/glutamyl-tRNA(Asn/Gln) amidotransferase subunit C from Acaryochloris marina (strain MBIC 11017).